We begin with the raw amino-acid sequence, 73 residues long: Venom protein 55.1 (73 aa).

The signal sequence occupies residues 1 to 19 (MNFLCILFVVSLISSLSKC). At proline 57 the chain carries Proline amide. Residues 61–73 (RRSFDLYALVNAK) constitute a propeptide that is removed on maturation.

It belongs to the diuretic hormone class 2 family. As to expression, expressed by the venom gland.

It is found in the secreted. In terms of biological role, regulates fluid secretion. The sequence is that of Venom protein 55.1 from Lychas mucronatus (Chinese swimming scorpion).